Reading from the N-terminus, the 228-residue chain is Phosphoribosylformylglycinamidine synthase subunit PurQ (228 aa).

One can recognise a Glutamine amidotransferase type-1 domain in the interval 2–225 (KAAVISFPGS…INQTEGADVR (224 aa)). Cys86 acts as the Nucleophile in catalysis. Active-site residues include His194 and Glu196.

Part of the FGAM synthase complex composed of 1 PurL, 1 PurQ and 2 PurS subunits.

It localises to the cytoplasm. The enzyme catalyses N(2)-formyl-N(1)-(5-phospho-beta-D-ribosyl)glycinamide + L-glutamine + ATP + H2O = 2-formamido-N(1)-(5-O-phospho-beta-D-ribosyl)acetamidine + L-glutamate + ADP + phosphate + H(+). It catalyses the reaction L-glutamine + H2O = L-glutamate + NH4(+). It functions in the pathway purine metabolism; IMP biosynthesis via de novo pathway; 5-amino-1-(5-phospho-D-ribosyl)imidazole from N(2)-formyl-N(1)-(5-phospho-D-ribosyl)glycinamide: step 1/2. Part of the phosphoribosylformylglycinamidine synthase complex involved in the purines biosynthetic pathway. Catalyzes the ATP-dependent conversion of formylglycinamide ribonucleotide (FGAR) and glutamine to yield formylglycinamidine ribonucleotide (FGAM) and glutamate. The FGAM synthase complex is composed of three subunits. PurQ produces an ammonia molecule by converting glutamine to glutamate. PurL transfers the ammonia molecule to FGAR to form FGAM in an ATP-dependent manner. PurS interacts with PurQ and PurL and is thought to assist in the transfer of the ammonia molecule from PurQ to PurL. The protein is Phosphoribosylformylglycinamidine synthase subunit PurQ of Lacticaseibacillus paracasei (strain ATCC 334 / BCRC 17002 / CCUG 31169 / CIP 107868 / KCTC 3260 / NRRL B-441) (Lactobacillus paracasei).